A 195-amino-acid chain; its full sequence is Holliday junction branch migration complex subunit RuvA (195 aa).

The interval 1-61 (MYEYFEGIIS…DTGITLYGFQ (61 aa)) is domain I. Positions 62-140 (DQDDKGLFLK…DYVARLDKPE (79 aa)) are domain II. The segment at 141-146 (NGEEIS) is flexible linker. The tract at residues 146 to 195 (SPALNDALLALIALGYTQKEVDRITPKLVEIEADTADQYIKKGLALLLKK) is domain III.

This sequence belongs to the RuvA family. As to quaternary structure, homotetramer. Forms an RuvA(8)-RuvB(12)-Holliday junction (HJ) complex. HJ DNA is sandwiched between 2 RuvA tetramers; dsDNA enters through RuvA and exits via RuvB. An RuvB hexamer assembles on each DNA strand where it exits the tetramer. Each RuvB hexamer is contacted by two RuvA subunits (via domain III) on 2 adjacent RuvB subunits; this complex drives branch migration. In the full resolvosome a probable DNA-RuvA(4)-RuvB(12)-RuvC(2) complex forms which resolves the HJ.

The protein resides in the cytoplasm. Its function is as follows. The RuvA-RuvB-RuvC complex processes Holliday junction (HJ) DNA during genetic recombination and DNA repair, while the RuvA-RuvB complex plays an important role in the rescue of blocked DNA replication forks via replication fork reversal (RFR). RuvA specifically binds to HJ cruciform DNA, conferring on it an open structure. The RuvB hexamer acts as an ATP-dependent pump, pulling dsDNA into and through the RuvAB complex. HJ branch migration allows RuvC to scan DNA until it finds its consensus sequence, where it cleaves and resolves the cruciform DNA. This chain is Holliday junction branch migration complex subunit RuvA, found in Lactobacillus acidophilus (strain ATCC 700396 / NCK56 / N2 / NCFM).